A 96-amino-acid polypeptide reads, in one-letter code: Large ribosomal subunit protein uL23 (96 aa).

It belongs to the universal ribosomal protein uL23 family. In terms of assembly, part of the 50S ribosomal subunit. Contacts protein L29, and trigger factor when it is bound to the ribosome.

In terms of biological role, one of the early assembly proteins it binds 23S rRNA. One of the proteins that surrounds the polypeptide exit tunnel on the outside of the ribosome. Forms the main docking site for trigger factor binding to the ribosome. This chain is Large ribosomal subunit protein uL23, found in Enterococcus faecalis (strain ATCC 700802 / V583).